The primary structure comprises 527 residues: Glutamate--cysteine ligase (527 aa).

The protein belongs to the glutamate--cysteine ligase type 1 family. Type 1 subfamily.

The catalysed reaction is L-cysteine + L-glutamate + ATP = gamma-L-glutamyl-L-cysteine + ADP + phosphate + H(+). It functions in the pathway sulfur metabolism; glutathione biosynthesis; glutathione from L-cysteine and L-glutamate: step 1/2. This is Glutamate--cysteine ligase from Pseudomonas aeruginosa (strain UCBPP-PA14).